Here is a 500-residue protein sequence, read N- to C-terminus: MSFVLAIDQGTTSSRAIVFRSDISIAAVAQQEFPQHFPASGWVEHEPEDIWTSTVMTCRDALDKAGIKAKDIAAIGITNQRETTVVWDRATGQAVHRAIVWQDRRTADICAKLKADGYEPDVSAKTGLIIDPYFSGTKVAWILDHVPGARERAERGELLFGTVDCYLLWRLTGGRVHATDATNASRTLLFNIHTGQWDDTLLKLLRVPRSMLPEVKDSSAEFGTTTPDLFGGPIKVSGIAGDQQAATIGQACFTPGMMKSTYGTGCFALLNTGATPVKSNNKLLTTIAYQLGGVRTYALEGSIFVAGSAVQWLRDGLGIIKHAAETGPLADKSDSMQSVYLVPAFVGLGAPYWNPRVRGALFGLTRNTGPAELAHATLESVCYQTYDLWAAMRADWPDASAATIVLRVDGGMTASDWTMQRLADLLDAPVDRPMIQETTALGAAYLAGLNAGVYPEPEKFADNWRLEHRFKPAMSAATRQRKLAGWARAVKGVLASDEGE.

ADP is bound at residue Thr-11. Residues Thr-11, Thr-12, and Ser-13 each contribute to the ATP site. Thr-11 is a binding site for sn-glycerol 3-phosphate. Arg-15 is an ADP binding site. Residues Arg-81, Glu-82, Tyr-133, and Asp-242 each coordinate sn-glycerol 3-phosphate. Positions 81, 82, 133, 242, and 243 each coordinate glycerol. Thr-264 and Gly-307 together coordinate ADP. Positions 264, 307, 311, and 411 each coordinate ATP. Gly-411 is a binding site for ADP.

This sequence belongs to the FGGY kinase family.

It catalyses the reaction glycerol + ATP = sn-glycerol 3-phosphate + ADP + H(+). Its pathway is polyol metabolism; glycerol degradation via glycerol kinase pathway; sn-glycerol 3-phosphate from glycerol: step 1/1. Its activity is regulated as follows. Inhibited by fructose 1,6-bisphosphate (FBP). In terms of biological role, key enzyme in the regulation of glycerol uptake and metabolism. Catalyzes the phosphorylation of glycerol to yield sn-glycerol 3-phosphate. This Bradyrhizobium sp. (strain BTAi1 / ATCC BAA-1182) protein is Glycerol kinase.